A 207-amino-acid polypeptide reads, in one-letter code: Outer-membrane lipoprotein LolB (207 aa).

The first 21 residues, 1–21 (MTLPDFRLIRLLPLASLVLTA), serve as a signal peptide directing secretion. A lipid anchor (N-palmitoyl cysteine) is attached at Cys-22. The S-diacylglycerol cysteine moiety is linked to residue Cys-22.

Belongs to the LolB family. In terms of assembly, monomer.

It is found in the cell outer membrane. Its function is as follows. Plays a critical role in the incorporation of lipoproteins in the outer membrane after they are released by the LolA protein. In Salmonella arizonae (strain ATCC BAA-731 / CDC346-86 / RSK2980), this protein is Outer-membrane lipoprotein LolB.